Consider the following 388-residue polypeptide: Cytochrome b (388 aa).

The next 4 helical transmembrane spans lie at 38–58 (FGCL…FLAM), 82–104 (WLLR…LHIF), 119–139 (VWCL…IGYV), and 185–205 (FFSL…LHLA). Heme b contacts are provided by His-88 and His-102. Heme b contacts are provided by His-189 and His-203. His-208 serves as a coordination point for a ubiquinone. 4 helical membrane passes run 231-251 (FYVK…IWIF), 295-315 (AGGV…PFFK), 327-347 (IHQG…WIGC), and 354-373 (FVTI…AITP).

This sequence belongs to the cytochrome b family. The main subunits of complex b-c1 are: cytochrome b, cytochrome c1 and the Rieske protein. Heme b serves as cofactor.

It is found in the mitochondrion inner membrane. In terms of biological role, component of the ubiquinol-cytochrome c reductase complex (complex III or cytochrome b-c1 complex) that is part of the mitochondrial respiratory chain. The b-c1 complex mediates electron transfer from ubiquinol to cytochrome c. Contributes to the generation of a proton gradient across the mitochondrial membrane that is then used for ATP synthesis. In Zea mays (Maize), this protein is Cytochrome b (MT-CYB).